The sequence spans 744 residues: Photosystem I P700 chlorophyll a apoprotein A2 (744 aa).

8 helical membrane-spanning segments follow: residues 48 to 71 (LFAT…FHIA), 137 to 160 (LYAG…LHLQ), 177 to 201 (LNHH…HVAI), 275 to 293 (MAHH…GHMY), 337 to 360 (LHFQ…QHMY), 376 to 402 (AALY…IFLV), 424 to 446 (AIIS…LYVH), and 527 to 545 (FLVH…LILV). [4Fe-4S] cluster is bound by residues cysteine 569 and cysteine 578. 2 helical membrane-spanning segments follow: residues 585–606 (AFYL…YWHW) and 653–675 (LAVW…MFLI). Chlorophyll a is bound by residues histidine 664, methionine 672, and tyrosine 680. Tryptophan 681 contacts phylloquinone. A helical transmembrane segment spans residues 717-737 (LVGLAHFTVGYVLTYAAFVIA).

It belongs to the PsaA/PsaB family. In terms of assembly, the PsaA/B heterodimer binds the P700 chlorophyll special pair and subsequent electron acceptors. PSI consists of a core antenna complex that captures photons, and an electron transfer chain that converts photonic excitation into a charge separation. The cyanobacterial PSI reaction center is composed of one copy each of PsaA,B,C,D,E,F,I,J,K,L,M and X, and forms trimeric complexes. PSI electron transfer chain: 5 chlorophyll a, 1 chlorophyll a', 2 phylloquinones and 3 4Fe-4S clusters. PSI core antenna: 90 chlorophyll a, 22 carotenoids, 3 phospholipids and 1 galactolipid. P700 is a chlorophyll a/chlorophyll a' dimer, A0 is one or more chlorophyll a, A1 is one or both phylloquinones and FX is a shared 4Fe-4S iron-sulfur center. is required as a cofactor.

It is found in the cellular thylakoid membrane. It carries out the reaction reduced [plastocyanin] + hnu + oxidized [2Fe-2S]-[ferredoxin] = oxidized [plastocyanin] + reduced [2Fe-2S]-[ferredoxin]. Its function is as follows. PsaA and PsaB bind P700, the primary electron donor of photosystem I (PSI), as well as the electron acceptors A0, A1 and FX. PSI is a plastocyanin/cytochrome c6-ferredoxin oxidoreductase, converting photonic excitation into a charge separation, which transfers an electron from the donor P700 chlorophyll pair to the spectroscopically characterized acceptors A0, A1, FX, FA and FB in turn. Oxidized P700 is reduced on the lumenal side of the thylakoid membrane by plastocyanin or cytochrome c6. This chain is Photosystem I P700 chlorophyll a apoprotein A2, found in Synechococcus sp. (strain JA-2-3B'a(2-13)) (Cyanobacteria bacterium Yellowstone B-Prime).